Consider the following 406-residue polypeptide: S-adenosylmethionine synthase (406 aa).

140-145 (GRGSVD) contributes to the ATP binding site.

This sequence belongs to the AdoMet synthase 2 family. Mg(2+) is required as a cofactor.

It carries out the reaction L-methionine + ATP + H2O = S-adenosyl-L-methionine + phosphate + diphosphate. It participates in amino-acid biosynthesis; S-adenosyl-L-methionine biosynthesis; S-adenosyl-L-methionine from L-methionine: step 1/1. Its function is as follows. Catalyzes the formation of S-adenosylmethionine from methionine and ATP. This Aeropyrum pernix (strain ATCC 700893 / DSM 11879 / JCM 9820 / NBRC 100138 / K1) protein is S-adenosylmethionine synthase (mat).